We begin with the raw amino-acid sequence, 210 residues long: Protein GrpE (210 aa).

Residues 1 to 31 (MAKDPQTPTDEELARAERDAEPQPGDATDDE) are disordered. Basic and acidic residues predominate over residues 12–21 (ELARAERDAE).

The protein belongs to the GrpE family. As to quaternary structure, homodimer.

The protein resides in the cytoplasm. Participates actively in the response to hyperosmotic and heat shock by preventing the aggregation of stress-denatured proteins, in association with DnaK and GrpE. It is the nucleotide exchange factor for DnaK and may function as a thermosensor. Unfolded proteins bind initially to DnaJ; upon interaction with the DnaJ-bound protein, DnaK hydrolyzes its bound ATP, resulting in the formation of a stable complex. GrpE releases ADP from DnaK; ATP binding to DnaK triggers the release of the substrate protein, thus completing the reaction cycle. Several rounds of ATP-dependent interactions between DnaJ, DnaK and GrpE are required for fully efficient folding. This Chromohalobacter salexigens (strain ATCC BAA-138 / DSM 3043 / CIP 106854 / NCIMB 13768 / 1H11) protein is Protein GrpE.